We begin with the raw amino-acid sequence, 660 residues long: Ankyrin repeat domain-containing protein OPG023 (660 aa).

9 ANK repeats span residues 31–64 (FKNN…PLHK), 101–131 (NDFN…DLSV), 135–166 (NHRS…SVLY), 190–222 (YIIA…KPSS), 226–257 (NYCT…NTAY), 268–302 (RGIM…PYGI), 325–359 (NSDV…VVNK), 449–478 (RGET…DVNI), and 482–512 (NGYT…TLDC). The tract at residues 578-658 (NTMFSLIFTE…PYTIKYKIFE (81 aa)) is PRANC/F-box-like.

The protein belongs to the orthopoxvirus OPG023 family. Interacts (via N-terminus) with host RELA. Interacts (via PRANC/F-box-like domain) with the SKP1 component of the host SCF ubiquitin ligase complex.

Functionally, substrate-specific adapter of SKP1-containing E3 ubiquitin-protein ligases which mediate the ubiquitination and subsequent proteasomal degradation of host target proteins. Prevents activation and subsequent nuclear localization of NF-kappa-B in infected cells, by targeting NF-kappa-B RELA subunit to the SCF E3 ligase complex. This is Ankyrin repeat domain-containing protein OPG023 (OPG023) from Cynomys gunnisoni (Gunnison's prairie dog).